The following is a 285-amino-acid chain: Pantothenate synthetase (285 aa).

ATP is bound at residue 30-37 (MGNLHRGH). The Proton donor role is filled by His-37. Gln-61 provides a ligand contact to (R)-pantoate. Gln-61 serves as a coordination point for beta-alanine. 149 to 152 (GRKD) contacts ATP. A (R)-pantoate-binding site is contributed by Gln-155. Residues Val-178 and 186–189 (LSSR) contribute to the ATP site.

It belongs to the pantothenate synthetase family. As to quaternary structure, homodimer.

The protein localises to the cytoplasm. The enzyme catalyses (R)-pantoate + beta-alanine + ATP = (R)-pantothenate + AMP + diphosphate + H(+). It participates in cofactor biosynthesis; (R)-pantothenate biosynthesis; (R)-pantothenate from (R)-pantoate and beta-alanine: step 1/1. Catalyzes the condensation of pantoate with beta-alanine in an ATP-dependent reaction via a pantoyl-adenylate intermediate. The sequence is that of Pantothenate synthetase from Halorhodospira halophila (strain DSM 244 / SL1) (Ectothiorhodospira halophila (strain DSM 244 / SL1)).